A 314-amino-acid polypeptide reads, in one-letter code: MSSSDLVAASIQGNLDEQISQLMQCKPLSEPDVRALCEKAKEILAEESNVQPVKSPVTICGDIHGQFHDLAELFRIGGQCPDTNYLFMGDYVDRGYYSVETVTLLVALKVRYPQRLTILRGNHESRQITQVYGFYDECLRKYGNANVWKTFTDLFDYFPLTALVESEIFCLHGGLSPSIETLDNVRSFDRVQEVPHEGAMCDLLWSDPDDCCGWGMSPRGAGYTFGQDISEQFHQTNNLKLIARAHQLVMEGYNWSHEQKVVTIFSAPNYCYRCGNMASILEVDDCRGHTFIQFDPAPRRGEPDVTRRTPDYFL.

Positions 62, 64, 90, and 122 each coordinate Mn(2+). Catalysis depends on His-123, which acts as the Proton donor. Mn(2+) contacts are provided by His-172 and His-246.

This sequence belongs to the PPP phosphatase family. PP-2A subfamily. It depends on Mn(2+) as a cofactor.

The protein localises to the cytoplasm. The enzyme catalyses O-phospho-L-seryl-[protein] + H2O = L-seryl-[protein] + phosphate. It catalyses the reaction O-phospho-L-threonyl-[protein] + H2O = L-threonyl-[protein] + phosphate. The sequence is that of Serine/threonine-protein phosphatase PP2A-5 catalytic subunit (NPP5) from Nicotiana tabacum (Common tobacco).